The following is a 235-amino-acid chain: Small ribosomal subunit protein uS3 (235 aa).

A KH type-2 domain is found at 39 to 107; it reads VRSYVKKKLI…PAQVNISEIR (69 aa).

It belongs to the universal ribosomal protein uS3 family. As to quaternary structure, part of the 30S ribosomal subunit. Forms a tight complex with proteins S10 and S14.

Its function is as follows. Binds the lower part of the 30S subunit head. Binds mRNA in the 70S ribosome, positioning it for translation. The chain is Small ribosomal subunit protein uS3 from Buchnera aphidicola subsp. Cinara cedri (strain Cc).